The sequence spans 358 residues: Beta-lactamase (358 aa).

S60 serves as the catalytic Acyl-ester intermediate. Y146 (proton acceptor) is an active-site residue. 311-313 lines the substrate pocket; it reads KTG.

The protein belongs to the class-C beta-lactamase family.

It is found in the periplasm. The catalysed reaction is a beta-lactam + H2O = a substituted beta-amino acid. This protein is a serine beta-lactamase with a substrate specificity for cephalosporins. The chain is Beta-lactamase from Pseudomonas fluorescens.